A 179-amino-acid polypeptide reads, in one-letter code: Calcineurin subunit B type 2 (179 aa).

The N-myristoyl glycine moiety is linked to residue glycine 2. 4 consecutive EF-hand domains span residues 18–53 (EEIRRLGKSFRKLDLDKSGSLSIEEFMRLPELQQNP), 57–85 (RVIDIFDTDGNGEVDFHEFIVGTSQFSVK), 87–122 (DEEQKLRFAFRIYDMDNDGFISNGELFQVLKMMVGN), and 128–163 (QLQQLVDKSILVLDKDGDGRISFEEFSDVVKTMEIH). 14 residues coordinate Ca(2+): aspartate 31, aspartate 33, serine 35, serine 37, glutamate 42, aspartate 63, aspartate 65, asparagine 67, glutamate 69, glutamate 74, aspartate 100, aspartate 102, aspartate 104, and glutamate 111. The tract at residues 131 to 136 (QLVDKS) is calcineurin A binding. Aspartate 141, aspartate 143, aspartate 145, arginine 147, and glutamate 152 together coordinate Ca(2+).

The protein belongs to the calcineurin regulatory subunit family. As to quaternary structure, forms a complex composed of a calmodulin-dependent catalytic subunit (also known as calcineurin A) and a regulatory Ca(2+)-binding subunit (also known as calcineurin B). There are three catalytic subunits, each encoded by a separate gene (PPP3CA, PPP3CB, and PPP3CC) and two regulatory subunits which are also encoded by separate genes (PPP3R1 and PPP3R2). Interacts with SPATA33 (via PQIIIT motif). As to expression, expressed in osteoblasts and bone marrow (at protein level). Expressed in the testis. Expressed in the sperm midpiece in a SPATA33-dependent manner (at protein level).

The protein localises to the mitochondrion. Functionally, regulatory subunit of calcineurin, a calcium-dependent, calmodulin stimulated protein phosphatase. Confers calcium sensitivity. In Mus musculus (Mouse), this protein is Calcineurin subunit B type 2 (Ppp3r2).